The following is a 558-amino-acid chain: Membrane protein insertase YidC (558 aa).

Helical transmembrane passes span 3 to 23, 364 to 384, 438 to 458, 477 to 497, and 508 to 528; these read IKRT…FDNW, FVGN…AVFF, LPVV…LASV, PYFI…KLNP, and MMFM…GLVL.

The protein belongs to the OXA1/ALB3/YidC family. Type 1 subfamily. Interacts with the Sec translocase complex via SecD. Specifically interacts with transmembrane segments of nascent integral membrane proteins during membrane integration.

Its subcellular location is the cell inner membrane. Required for the insertion and/or proper folding and/or complex formation of integral membrane proteins into the membrane. Involved in integration of membrane proteins that insert both dependently and independently of the Sec translocase complex, as well as at least some lipoproteins. Aids folding of multispanning membrane proteins. The protein is Membrane protein insertase YidC of Burkholderia pseudomallei (strain 668).